The sequence spans 597 residues: Lipoprotein LpqB (597 aa).

An N-terminal signal peptide occupies residues methionine 1–glycine 28. A lipid anchor (N-palmitoyl cysteine) is attached at cysteine 29. Cysteine 29 carries the S-diacylglycerol cysteine lipid modification. The segment covering glutamine 39 to serine 51 has biased composition (polar residues). The interval glutamine 39 to glycine 59 is disordered.

It belongs to the LpqB lipoprotein family.

It localises to the cell membrane. The polypeptide is Lipoprotein LpqB (Rhodococcus opacus (strain B4)).